The sequence spans 430 residues: Serine hydroxymethyltransferase (430 aa).

120–122 is a (6S)-5,6,7,8-tetrahydrofolate binding site; the sequence is GHI. N6-(pyridoxal phosphate)lysine is present on Lys-226.

It belongs to the SHMT family. In terms of assembly, homodimer. It depends on pyridoxal 5'-phosphate as a cofactor.

It localises to the cytoplasm. It functions in the pathway amino-acid biosynthesis; glycine biosynthesis; glycine from L-serine: step 1/1. Functionally, catalyzes the reversible interconversion of serine and glycine with a modified folate serving as the one-carbon carrier. Also exhibits a pteridine-independent aldolase activity toward beta-hydroxyamino acids, producing glycine and aldehydes, via a retro-aldol mechanism. In Pyrobaculum neutrophilum (strain DSM 2338 / JCM 9278 / NBRC 100436 / V24Sta) (Thermoproteus neutrophilus), this protein is Serine hydroxymethyltransferase.